Here is a 214-residue protein sequence, read N- to C-terminus: Cytochrome c biogenesis ATP-binding export protein CcmA (214 aa).

The ABC transporter domain occupies 12 to 214; the sequence is LAAHDLAFSR…TRMLTLEVAA (203 aa). 44–51 contacts ATP; the sequence is GDNGAGKT.

This sequence belongs to the ABC transporter superfamily. CcmA exporter (TC 3.A.1.107) family. As to quaternary structure, the complex is composed of two ATP-binding proteins (CcmA) and two transmembrane proteins (CcmB).

It is found in the cell inner membrane. The enzyme catalyses heme b(in) + ATP + H2O = heme b(out) + ADP + phosphate + H(+). In terms of biological role, part of the ABC transporter complex CcmAB involved in the biogenesis of c-type cytochromes; once thought to export heme, this seems not to be the case, but its exact role is uncertain. Responsible for energy coupling to the transport system. This is Cytochrome c biogenesis ATP-binding export protein CcmA from Xanthomonas axonopodis pv. citri (strain 306).